Reading from the N-terminus, the 83-residue chain is Phytosulfokines 4 (83 aa).

The signal sequence occupies residues 1–28; the sequence is MAARTVAVAAALAVLLIFAASSATVAMA. Positions 29-74 are excised as a propeptide; it reads GRPTPTTSLDEEAAQAAAQSEIGGGCKEGEGEEECLARRTLTAHTD. Tyrosine 75 and tyrosine 77 each carry sulfotyrosine. The propeptide occupies 80-83; sequence QHHN.

The protein belongs to the phytosulfokine family. Post-translationally, sulfation is important for activity and for the binding to a putative membrane receptor. PSK-alpha is produced by endopeptidase digestion. PSK-beta is produced from PSK-alpha by exopeptidase digestion.

It localises to the secreted. In terms of biological role, promotes plant cell differentiation, organogenesis and somatic embryogenesis as well as cell proliferation. This chain is Phytosulfokines 4 (PSK4), found in Oryza sativa subsp. japonica (Rice).